We begin with the raw amino-acid sequence, 290 residues long: Protein CREG2 (290 aa).

Residues methionine 1–glycine 31 form the signal peptide. N-linked (GlcNAc...) asparagine glycans are attached at residues asparagine 165 and asparagine 166.

The protein belongs to the CREG family. In terms of processing, it is not sure whether N-glycosylation is on Asn-165 and/or Asn-166. Brain specific mainly in the limbic system and faintly in the spinal cord but not in cerebellum.

The protein localises to the secreted. The chain is Protein CREG2 (CREG2) from Homo sapiens (Human).